The sequence spans 813 residues: Protein PPP4R3C1 (813 aa).

Residues 730 to 813 (NESESAIEGQ…PPPKRPNLST (84 aa)) form a disordered region. Residues 777–788 (YDTDDENDDDPY) show a composition bias toward acidic residues.

Belongs to the SMEK family.

This chain is Protein PPP4R3C1, found in Mus musculus (Mouse).